We begin with the raw amino-acid sequence, 258 residues long: NAD kinase (258 aa).

The active-site Proton acceptor is the aspartate 51. NAD(+) is bound by residues 51 to 52, lysine 56, 119 to 120, lysine 130, aspartate 149, 160 to 165, and alanine 184; these read DG, ND, and TAYSLS.

Belongs to the NAD kinase family. A divalent metal cation is required as a cofactor.

It is found in the cytoplasm. The catalysed reaction is NAD(+) + ATP = ADP + NADP(+) + H(+). Involved in the regulation of the intracellular balance of NAD and NADP, and is a key enzyme in the biosynthesis of NADP. Catalyzes specifically the phosphorylation on 2'-hydroxyl of the adenosine moiety of NAD to yield NADP. This Thermotoga sp. (strain RQ2) protein is NAD kinase.